Consider the following 432-residue polypeptide: Adenylosuccinate synthetase (432 aa).

Residues 13–19 and 41–43 each bind GTP; these read GDEGKGK and GHT. Asp-14 acts as the Proton acceptor in catalysis. Residues Asp-14 and Gly-41 each contribute to the Mg(2+) site. IMP-binding positions include 14–17, 39–42, Thr-130, Arg-144, Gln-225, Thr-240, and Arg-304; these read DEGK and NAGH. The active-site Proton donor is the His-42. 300 to 306 serves as a coordination point for substrate; sequence ATTGRRR. Residues Arg-306, 332 to 334, and 415 to 417 each bind GTP; these read KLD and STG.

It belongs to the adenylosuccinate synthetase family. In terms of assembly, homodimer. Mg(2+) serves as cofactor.

Its subcellular location is the cytoplasm. The enzyme catalyses IMP + L-aspartate + GTP = N(6)-(1,2-dicarboxyethyl)-AMP + GDP + phosphate + 2 H(+). Its pathway is purine metabolism; AMP biosynthesis via de novo pathway; AMP from IMP: step 1/2. Plays an important role in the de novo pathway of purine nucleotide biosynthesis. Catalyzes the first committed step in the biosynthesis of AMP from IMP. This is Adenylosuccinate synthetase from Pectobacterium atrosepticum (strain SCRI 1043 / ATCC BAA-672) (Erwinia carotovora subsp. atroseptica).